A 296-amino-acid chain; its full sequence is 4-hydroxy-tetrahydrodipicolinate synthase (296 aa).

A pyruvate-binding site is contributed by Thr-44. Tyr-132 acts as the Proton donor/acceptor in catalysis. The active-site Schiff-base intermediate with substrate is the Lys-162. Ile-204 contributes to the pyruvate binding site.

This sequence belongs to the DapA family. In terms of assembly, homotetramer; dimer of dimers.

It localises to the cytoplasm. The catalysed reaction is L-aspartate 4-semialdehyde + pyruvate = (2S,4S)-4-hydroxy-2,3,4,5-tetrahydrodipicolinate + H2O + H(+). Its pathway is amino-acid biosynthesis; L-lysine biosynthesis via DAP pathway; (S)-tetrahydrodipicolinate from L-aspartate: step 3/4. Functionally, catalyzes the condensation of (S)-aspartate-beta-semialdehyde [(S)-ASA] and pyruvate to 4-hydroxy-tetrahydrodipicolinate (HTPA). This chain is 4-hydroxy-tetrahydrodipicolinate synthase, found in Novosphingobium aromaticivorans (strain ATCC 700278 / DSM 12444 / CCUG 56034 / CIP 105152 / NBRC 16084 / F199).